Consider the following 120-residue polypeptide: Protein p14.5 (120 aa).

Disordered stretches follow at residues 1-27 and 80-120; these read MADF…LEYD and REFT…HKSK. Ala2 bears the N-acetylalanine; by host mark. Basic residues predominate over residues 103–120; the sequence is KPKKKKHLFPKLSSHKSK.

Belongs to the asfivirus structural protein p14.5 family. In terms of assembly, interacts with the major capsid protein. Interacts with host IRF3; this interaction interferes with the recruitment of IRF3 to TBK1. In terms of processing, acetylated.

Its subcellular location is the virion. Structural protein required for transport of intracellular particles from the assembly sites to the plasma membrane. Binds to both ssDNA and dsDNA. Suppressed the activation of the cGAS/STING pathway by interfering with the recruitment of IRF3 to TBK1, which in turn suppresses IRF3 phosphorylation, decreasing interferon production. The polypeptide is Protein p14.5 (Ornithodoros (relapsing fever ticks)).